Consider the following 101-residue polypeptide: Urease subunit beta (101 aa).

This sequence belongs to the urease beta subunit family. As to quaternary structure, heterotrimer of UreA (gamma), UreB (beta) and UreC (alpha) subunits. Three heterotrimers associate to form the active enzyme.

It localises to the cytoplasm. The enzyme catalyses urea + 2 H2O + H(+) = hydrogencarbonate + 2 NH4(+). It participates in nitrogen metabolism; urea degradation; CO(2) and NH(3) from urea (urease route): step 1/1. The chain is Urease subunit beta from Burkholderia ambifaria (strain MC40-6).